Reading from the N-terminus, the 208-residue chain is Peptidyl-tRNA hydrolase (208 aa).

Y19 contributes to the tRNA binding site. The active-site Proton acceptor is H24. TRNA contacts are provided by F71, N73, and N119.

It belongs to the PTH family. In terms of assembly, monomer.

It is found in the cytoplasm. The enzyme catalyses an N-acyl-L-alpha-aminoacyl-tRNA + H2O = an N-acyl-L-amino acid + a tRNA + H(+). Hydrolyzes ribosome-free peptidyl-tRNAs (with 1 or more amino acids incorporated), which drop off the ribosome during protein synthesis, or as a result of ribosome stalling. In terms of biological role, catalyzes the release of premature peptidyl moieties from peptidyl-tRNA molecules trapped in stalled 50S ribosomal subunits, and thus maintains levels of free tRNAs and 50S ribosomes. The protein is Peptidyl-tRNA hydrolase of Synechococcus elongatus (strain ATCC 33912 / PCC 7942 / FACHB-805) (Anacystis nidulans R2).